A 487-amino-acid polypeptide reads, in one-letter code: Protein nucleotidyltransferase YdiU (487 aa).

Residues Gly-90, Gly-92, Arg-93, Lys-113, Asp-125, Gly-126, Arg-176, and Arg-183 each coordinate ATP. The active-site Proton acceptor is the Asp-252. The Mg(2+) site is built by Asn-253 and Asp-262. Asp-262 is an ATP binding site.

It belongs to the SELO family. Mg(2+) is required as a cofactor. The cofactor is Mn(2+).

It carries out the reaction L-seryl-[protein] + ATP = 3-O-(5'-adenylyl)-L-seryl-[protein] + diphosphate. The catalysed reaction is L-threonyl-[protein] + ATP = 3-O-(5'-adenylyl)-L-threonyl-[protein] + diphosphate. It catalyses the reaction L-tyrosyl-[protein] + ATP = O-(5'-adenylyl)-L-tyrosyl-[protein] + diphosphate. The enzyme catalyses L-histidyl-[protein] + UTP = N(tele)-(5'-uridylyl)-L-histidyl-[protein] + diphosphate. It carries out the reaction L-seryl-[protein] + UTP = O-(5'-uridylyl)-L-seryl-[protein] + diphosphate. The catalysed reaction is L-tyrosyl-[protein] + UTP = O-(5'-uridylyl)-L-tyrosyl-[protein] + diphosphate. In terms of biological role, nucleotidyltransferase involved in the post-translational modification of proteins. It can catalyze the addition of adenosine monophosphate (AMP) or uridine monophosphate (UMP) to a protein, resulting in modifications known as AMPylation and UMPylation. The polypeptide is Protein nucleotidyltransferase YdiU (Pseudomonas fluorescens (strain Pf0-1)).